The following is a 61-amino-acid chain: Small ribosomal subunit protein uS14 (61 aa).

Positions 24, 27, 40, and 43 each coordinate Zn(2+).

It belongs to the universal ribosomal protein uS14 family. Zinc-binding uS14 subfamily. In terms of assembly, part of the 30S ribosomal subunit. Contacts proteins S3 and S10. The cofactor is Zn(2+).

Functionally, binds 16S rRNA, required for the assembly of 30S particles and may also be responsible for determining the conformation of the 16S rRNA at the A site. The chain is Small ribosomal subunit protein uS14 from Streptococcus mutans serotype c (strain ATCC 700610 / UA159).